The sequence spans 323 residues: MLSVNLASLPIVEEMISRKEDLNIEVIKLENGATVLDCGVNVMGSFEAGKLFTKICLGGLAHVGISISGSLDNKLVLPCVKIKTSHPAIATLGSQKAGWSVSVGKYFAMGSGPARALAMMPKATYEEIDYRDEADVAILCLESSQLPDENVADHVAEKCGVDVSKVYLLVAPTASMVGAVQISGRVVENGTYKMLEALHFDVRKVKFAAGIAPVAPVIGDDLKMMGATNDMVLYGGRTFYYVKSDEGDDIENLCKSLPSCSAETYGKPFLDVFKEANYDFYKIDKGMFAPAIVTINDLRTGKLMSYGETNVDVIKKSLKFSQL.

Belongs to the MCH family.

Its subcellular location is the cytoplasm. It carries out the reaction 5,10-methenyl-5,6,7,8-tetrahydromethanopterin + H2O = N(5)-formyl-5,6,7,8-tetrahydromethanopterin + H(+). It participates in one-carbon metabolism; methanogenesis from CO(2); 5,10-methenyl-5,6,7,8-tetrahydromethanopterin from CO(2): step 3/3. Its function is as follows. Catalyzes the reversible interconversion of 5-formyl-H(4)MPT to methenyl-H(4)MPT(+). This is Methenyltetrahydromethanopterin cyclohydrolase from Methanococcus maripaludis (strain DSM 14266 / JCM 13030 / NBRC 101832 / S2 / LL).